The primary structure comprises 523 residues: Putative glucosylceramidase 1 (523 aa).

Positions 1–23 are cleaved as a signal peptide; that stretch reads MKSRFLLKIFIFLAVFGVDSVRA. An N-linked (GlcNAc...) asparagine glycan is attached at Asn168. The Nucleophile role is filled by Glu358.

The protein belongs to the glycosyl hydrolase 30 family.

It carries out the reaction a beta-D-glucosylceramide + H2O = an N-acyl-sphingoid base + D-glucose. The enzyme catalyses a beta-D-glucosyl-(1&lt;-&gt;1')-N-acylsphing-4-enine + H2O = an N-acylsphing-4-enine + D-glucose. The catalysed reaction is an N-acyl-1-beta-D-glucosyl-15-methylhexadecasphing-4-enine + H2O = an N-acyl-15-methylhexadecasphing-4-enine + D-glucose. Its pathway is lipid metabolism; sphingolipid metabolism. Glucosylceramidase that catalyzes the hydrolysis of glucosylceramides into free ceramides and glucose. C.elegans contains specific sphingoid bases, which are unique or different in structure compared to the sphingoid bases found in other animals. Two examples of these distinctive compounds are: 15-methylhexadecasphinganine and 15-methylhexadecasphing-4-enine. The protein is Putative glucosylceramidase 1 (gba-1) of Caenorhabditis elegans.